Reading from the N-terminus, the 89-residue chain is Small ribosomal subunit protein uS15 (89 aa).

It belongs to the universal ribosomal protein uS15 family. As to quaternary structure, part of the 30S ribosomal subunit. Forms a bridge to the 50S subunit in the 70S ribosome, contacting the 23S rRNA.

One of the primary rRNA binding proteins, it binds directly to 16S rRNA where it helps nucleate assembly of the platform of the 30S subunit by binding and bridging several RNA helices of the 16S rRNA. Functionally, forms an intersubunit bridge (bridge B4) with the 23S rRNA of the 50S subunit in the ribosome. The polypeptide is Small ribosomal subunit protein uS15 (Bartonella quintana (strain Toulouse) (Rochalimaea quintana)).